Consider the following 864-residue polypeptide: Leucine--tRNA ligase (864 aa).

Positions 42 to 52 (PYPSGKLHMGH) match the 'HIGH' region motif. The 'KMSKS' region motif lies at 624-628 (KMSKS). K627 serves as a coordination point for ATP.

This sequence belongs to the class-I aminoacyl-tRNA synthetase family.

The protein localises to the cytoplasm. It carries out the reaction tRNA(Leu) + L-leucine + ATP = L-leucyl-tRNA(Leu) + AMP + diphosphate. This Burkholderia vietnamiensis (strain G4 / LMG 22486) (Burkholderia cepacia (strain R1808)) protein is Leucine--tRNA ligase.